Reading from the N-terminus, the 366-residue chain is tRNA/tmRNA (uracil-C(5))-methyltransferase (366 aa).

S-adenosyl-L-methionine contacts are provided by Gln-189, Tyr-217, Asn-222, Glu-238, and Asp-298. Cys-323 functions as the Nucleophile in the catalytic mechanism. The active-site Proton acceptor is Glu-357.

Belongs to the class I-like SAM-binding methyltransferase superfamily. RNA M5U methyltransferase family. TrmA subfamily.

The enzyme catalyses uridine(54) in tRNA + S-adenosyl-L-methionine = 5-methyluridine(54) in tRNA + S-adenosyl-L-homocysteine + H(+). It carries out the reaction uridine(341) in tmRNA + S-adenosyl-L-methionine = 5-methyluridine(341) in tmRNA + S-adenosyl-L-homocysteine + H(+). In terms of biological role, dual-specificity methyltransferase that catalyzes the formation of 5-methyluridine at position 54 (m5U54) in all tRNAs, and that of position 341 (m5U341) in tmRNA (transfer-mRNA). The chain is tRNA/tmRNA (uracil-C(5))-methyltransferase from Shewanella oneidensis (strain ATCC 700550 / JCM 31522 / CIP 106686 / LMG 19005 / NCIMB 14063 / MR-1).